The sequence spans 199 residues: Cell division protein SepF (199 aa).

Residues 15 to 79 (TEDGDETEVQ…PQPQQKSSTE (65 aa)) form a disordered region.

The protein belongs to the SepF family. As to quaternary structure, homodimer. Interacts with FtsZ.

It localises to the cytoplasm. Functionally, cell division protein that is part of the divisome complex and is recruited early to the Z-ring. Probably stimulates Z-ring formation, perhaps through the cross-linking of FtsZ protofilaments. Its function overlaps with FtsA. The chain is Cell division protein SepF from Streptococcus sanguinis (strain SK36).